The following is a 512-amino-acid chain: RCC1 domain-containing protein DDB_G0279253 (512 aa).

RCC1 repeat units lie at residues 1-56 (MKIY…MIID), 58-134 (GDLY…ACDN), 135-185 (NGNI…NNNN), 197-248 (SGGV…ALSS), 249-319 (ENDV…LLDI), 321-384 (FKNV…LLTN), 386-443 (DKLY…IQVY), and 454-512 (NNNI…FILP). Positions 66 to 77 (NDSGQLGINSNE) are enriched in polar residues. Disordered regions lie at residues 66–85 (NDSG…QQQQ) and 162–200 (STSN…SGGV). A compositionally biased stretch (low complexity) spans 162–196 (STSNNKNNNNNNNNNNNNNNNNNNNNNNNNNNNNN).

The chain is RCC1 domain-containing protein DDB_G0279253 from Dictyostelium discoideum (Social amoeba).